The sequence spans 396 residues: Probable sugar efflux transporter (396 aa).

At 1-14 (MTTNTVSRKVAWLR) the chain is on the cytoplasmic side. Residues 15-35 (VVTLAVAAFIFNTTEFVPVGL) form a helical membrane-spanning segment. Over 36-49 (LSDIAQSFHMQTAQ) the chain is Periplasmic. The helical transmembrane segment at 50 to 70 (VGIMLTIYAWVVALMSLPFML) threads the bilayer. Residues 71–80 (MTSQVERRKL) lie on the Cytoplasmic side of the membrane. The chain crosses the membrane as a helical span at residues 81 to 101 (LICLFVVFIASHVLSFLSWSF). Thr-102 is a topological domain (periplasmic). A helical transmembrane segment spans residues 103 to 123 (VLVISRIGVAFAHAIFWSITA). The Cytoplasmic segment spans residues 124–135 (SLAIRMAPAGKR). The chain crosses the membrane as a helical span at residues 136-156 (AQALSLIATGTALAMVLGLPL). Topologically, residues 157–169 (GRIVGQYFGWRMT) are periplasmic. A helical transmembrane segment spans residues 170 to 190 (FFAIGIGALVTLLCLIKLLPL). The Cytoplasmic segment spans residues 191–208 (LPSEHSGSLKSLPLLFRR). A helical membrane pass occupies residues 209 to 229 (PALMSIYLLTVVVVTAHYTAY). Topologically, residues 230–245 (SYIEPFVQNIAGFSAN) are periplasmic. Residues 246–266 (FATALLLLLGGAGIIGSVIFG) traverse the membrane as a helical segment. The Cytoplasmic segment spans residues 267 to 274 (KLGNQYAS). A helical membrane pass occupies residues 275–295 (ALVSTAIALLLVCLALLLPAA). Over 296–298 (NSE) the chain is Periplasmic. A helical membrane pass occupies residues 299–319 (IHLGVLSIFWGIAMMIIGLGM). Residues 320 to 332 (QVKVLALAPDATD) lie on the Cytoplasmic side of the membrane. Residues 333 to 353 (VAMALFSGIFNIGIGAGALVG) form a helical membrane-spanning segment. Residues 354–363 (NQVSLHWSMS) are Periplasmic-facing. Residues 364–384 (MIGYVGAVPAFAALIWSIIIF) traverse the membrane as a helical segment. Topologically, residues 385–396 (RRWPVTLEEQTQ) are cytoplasmic.

Belongs to the major facilitator superfamily. SotB (TC 2.A.1.2) family.

The protein resides in the cell inner membrane. Its function is as follows. Involved in the efflux of sugars. The physiological role may be the reduction of the intracellular concentration of toxic sugars or sugar metabolites. The sequence is that of Probable sugar efflux transporter from Shigella flexneri.